Reading from the N-terminus, the 449-residue chain is tRNA modification GTPase MnmE (449 aa).

Arg-24, Glu-85, and Arg-124 together coordinate (6S)-5-formyl-5,6,7,8-tetrahydrofolate. The TrmE-type G domain maps to Gly-220 to Ser-369. Asn-230 serves as a coordination point for K(+). GTP contacts are provided by residues Asn-230–Ser-235, Ser-249–Thr-255, and Asp-274–Gly-277. Position 234 (Ser-234) interacts with Mg(2+). Residues Ser-249, Ile-251, and Thr-254 each coordinate K(+). Residue Thr-255 participates in Mg(2+) binding. Lys-449 contacts (6S)-5-formyl-5,6,7,8-tetrahydrofolate.

This sequence belongs to the TRAFAC class TrmE-Era-EngA-EngB-Septin-like GTPase superfamily. TrmE GTPase family. Homodimer. Heterotetramer of two MnmE and two MnmG subunits. Requires K(+) as cofactor.

The protein localises to the cytoplasm. Its function is as follows. Exhibits a very high intrinsic GTPase hydrolysis rate. Involved in the addition of a carboxymethylaminomethyl (cmnm) group at the wobble position (U34) of certain tRNAs, forming tRNA-cmnm(5)s(2)U34. In Akkermansia muciniphila (strain ATCC BAA-835 / DSM 22959 / JCM 33894 / BCRC 81048 / CCUG 64013 / CIP 107961 / Muc), this protein is tRNA modification GTPase MnmE.